Here is a 304-residue protein sequence, read N- to C-terminus: N-acetylmuramic acid 6-phosphate etherase 1 (304 aa).

Polar residues predominate over residues 1-10 (MENSHLGSLT). Positions 1-20 (MENSHLGSLTTERRNERSKR) are disordered. Residues 58 to 221 (AVGSLKKGGR…STAAMIKMGK (164 aa)) form the SIS domain. Glu86 serves as the catalytic Proton donor. Residue Glu117 is part of the active site.

This sequence belongs to the GCKR-like family. MurNAc-6-P etherase subfamily. As to quaternary structure, homodimer.

The enzyme catalyses N-acetyl-D-muramate 6-phosphate + H2O = N-acetyl-D-glucosamine 6-phosphate + (R)-lactate. Its pathway is amino-sugar metabolism; N-acetylmuramate degradation. Functionally, specifically catalyzes the cleavage of the D-lactyl ether substituent of MurNAc 6-phosphate, producing GlcNAc 6-phosphate and D-lactate. This is N-acetylmuramic acid 6-phosphate etherase 1 from Bacillus licheniformis (strain ATCC 14580 / DSM 13 / JCM 2505 / CCUG 7422 / NBRC 12200 / NCIMB 9375 / NCTC 10341 / NRRL NRS-1264 / Gibson 46).